We begin with the raw amino-acid sequence, 258 residues long: Imidazole glycerol phosphate synthase subunit HisF (258 aa).

Active-site residues include D11 and D130.

The protein belongs to the HisA/HisF family. Heterodimer of HisH and HisF.

The protein resides in the cytoplasm. It carries out the reaction 5-[(5-phospho-1-deoxy-D-ribulos-1-ylimino)methylamino]-1-(5-phospho-beta-D-ribosyl)imidazole-4-carboxamide + L-glutamine = D-erythro-1-(imidazol-4-yl)glycerol 3-phosphate + 5-amino-1-(5-phospho-beta-D-ribosyl)imidazole-4-carboxamide + L-glutamate + H(+). The protein operates within amino-acid biosynthesis; L-histidine biosynthesis; L-histidine from 5-phospho-alpha-D-ribose 1-diphosphate: step 5/9. Functionally, IGPS catalyzes the conversion of PRFAR and glutamine to IGP, AICAR and glutamate. The HisF subunit catalyzes the cyclization activity that produces IGP and AICAR from PRFAR using the ammonia provided by the HisH subunit. The protein is Imidazole glycerol phosphate synthase subunit HisF of Xanthomonas euvesicatoria pv. vesicatoria (strain 85-10) (Xanthomonas campestris pv. vesicatoria).